We begin with the raw amino-acid sequence, 535 residues long: CTP synthase (535 aa).

The tract at residues 1–268 (MSTKYIFVTG…DQIVCDHLKL (268 aa)) is amidoligase domain. Serine 14 serves as a coordination point for CTP. Serine 14 lines the UTP pocket. 15–20 (SMGKGI) serves as a coordination point for ATP. Tyrosine 55 provides a ligand contact to L-glutamine. Residue aspartate 72 participates in ATP binding. Mg(2+) contacts are provided by aspartate 72 and glutamate 142. Residues 149-151 (DME), 189-194 (KTKIAQ), and lysine 225 each bind CTP. UTP is bound by residues 189–194 (KTKIAQ) and lysine 225. An ATP-binding site is contributed by valine 243. Residues 293-535 (KIALVGKYVE…FIRVAVENSK (243 aa)) enclose the Glutamine amidotransferase type-1 domain. Residue glycine 355 participates in L-glutamine binding. Cysteine 382 functions as the Nucleophile; for glutamine hydrolysis in the catalytic mechanism. L-glutamine contacts are provided by residues 383-386 (LGMQ), glutamate 406, and arginine 464. Active-site residues include histidine 509 and glutamate 511.

The protein belongs to the CTP synthase family. As to quaternary structure, homotetramer. In contrast to E.coli CTP synthase, remains a tetramer at dilute enzyme concentrations even in the absence of Mg(2+), ATP and UTP.

It catalyses the reaction UTP + L-glutamine + ATP + H2O = CTP + L-glutamate + ADP + phosphate + 2 H(+). It carries out the reaction L-glutamine + H2O = L-glutamate + NH4(+). The enzyme catalyses UTP + NH4(+) + ATP = CTP + ADP + phosphate + 2 H(+). The protein operates within pyrimidine metabolism; CTP biosynthesis via de novo pathway; CTP from UDP: step 2/2. Its activity is regulated as follows. Allosterically activated by GTP, when glutamine is the substrate. GTP has no effect on the reaction when ammonia is the substrate. The allosteric effector GTP functions by stabilizing the protein conformation that binds the tetrahedral intermediate(s) formed during glutamine hydrolysis. Also activated by magnesium. Allosterically inhibited by CTP. Its function is as follows. Catalyzes the ATP-dependent amination of UTP to CTP with either L-glutamine or ammonia as the source of nitrogen. Is essential for the synthesis of CTP de novo. Contrary to other bacterial CTP synthases, the lactococcal enzyme is also able to convert dUTP to dCTP, but this reaction may not play a significant physiological role. Regulates intracellular CTP levels through interactions with the four ribonucleotide triphosphates. The sequence is that of CTP synthase from Lactococcus lactis subsp. cremoris (strain MG1363).